The sequence spans 131 residues: Leptin receptor overlapping transcript-like 1 (131 aa).

The next 4 membrane-spanning stretches (helical) occupy residues 7–27 (LISL…GCAL), 32–52 (QYWP…YCIA), 69–89 (LAIF…VVFA), and 100–120 (ALVL…FLVF).

This sequence belongs to the OB-RGRP/VPS55 family. As to quaternary structure, interacts with RAB13.

It localises to the membrane. In terms of biological role, negatively regulates growth hormone (GH) receptor cell surface expression in liver. May play a role in liver resistance to GH during periods of reduced nutrient availability. The polypeptide is Leptin receptor overlapping transcript-like 1 (Leprotl1) (Mus musculus (Mouse)).